We begin with the raw amino-acid sequence, 159 residues long: Phosphopantetheine adenylyltransferase (159 aa).

A substrate-binding site is contributed by serine 10. ATP is bound by residues 10–11 (SF) and histidine 18. Residues lysine 42, leucine 77, and lysine 91 each contribute to the substrate site. Residues 92-94 (GIR), glutamate 102, and 126-132 (NAHVSSS) contribute to the ATP site.

Belongs to the bacterial CoaD family. Homohexamer. Mg(2+) is required as a cofactor.

Its subcellular location is the cytoplasm. It catalyses the reaction (R)-4'-phosphopantetheine + ATP + H(+) = 3'-dephospho-CoA + diphosphate. It functions in the pathway cofactor biosynthesis; coenzyme A biosynthesis; CoA from (R)-pantothenate: step 4/5. Functionally, reversibly transfers an adenylyl group from ATP to 4'-phosphopantetheine, yielding dephospho-CoA (dPCoA) and pyrophosphate. This is Phosphopantetheine adenylyltransferase from Leifsonia xyli subsp. xyli (strain CTCB07).